We begin with the raw amino-acid sequence, 448 residues long: Protease Do-like 8, chloroplastic (448 aa).

A serine protease region spans residues 152–333 (EGNGSGVVWD…IPSSTVLKIV (182 aa)). Active-site charge relay system residues include H171, D214, and S292. A PDZ domain is found at 336 to 433 (LIQFSKVLRA…DKVTLKIKRG (98 aa)).

Belongs to the peptidase S1C family.

The protein localises to the plastid. It is found in the chloroplast thylakoid lumen. In terms of biological role, probable serine protease. In Arabidopsis thaliana (Mouse-ear cress), this protein is Protease Do-like 8, chloroplastic (DEGP8).